The sequence spans 24 residues: FLPLLAGLAANFFPKIFCKITRKC.

The cysteines at positions 18 and 24 are disulfide-linked.

In terms of tissue distribution, expressed by the skin glands.

The protein localises to the secreted. Functionally, shows antibacterial activity against representative Gram-negative and Gram-positive bacterial species, and hemolytic activity. This chain is Brevinin-1Ecb, found in Pelophylax ridibundus (Marsh frog).